Reading from the N-terminus, the 141-residue chain is Hemoglobin subunit alpha-A (141 aa).

Positions 1–141 (VLSSGDKANV…VSTVLTSKYR (141 aa)) constitute a Globin domain. Histidine 58 lines the O2 pocket. Histidine 87 serves as a coordination point for heme b.

The protein belongs to the globin family. In terms of assembly, heterotetramer of two alpha chains and two beta chains. In terms of tissue distribution, red blood cells.

Its function is as follows. Involved in oxygen transport from the lung to the various peripheral tissues. The chain is Hemoglobin subunit alpha-A (HBAA) from Caretta caretta (Loggerhead sea turtle).